The chain runs to 391 residues: Putative ABC transporter glucose-binding protein TsgA13 (391 aa).

A signal peptide spans 1–28; it reads MLDEESSIQRRDVLSALGAAGVTTLAGC. Residues 24-71 are disordered; the sequence is TLAGCTGGDTGDTDDTEASETTASEGTTSGTTTGDVETTDGGGPSEGE. Over residues 42 to 59 the composition is skewed to low complexity; that stretch reads SETTASEGTTSGTTTGDV.

The protein belongs to the BMP lipoprotein family. The complex is composed of two ATP-binding proteins (TsgD13), two transmembrane proteins (TsgB13 and TsgC13) and a solute-binding protein (TsgA13).

Functionally, part of an ABC transporter complex involved in glucose import. This Haloferax volcanii (strain ATCC 29605 / DSM 3757 / JCM 8879 / NBRC 14742 / NCIMB 2012 / VKM B-1768 / DS2) (Halobacterium volcanii) protein is Putative ABC transporter glucose-binding protein TsgA13 (tsgA13).